The chain runs to 423 residues: Sporulation-regulated protein 28 (423 aa).

One can recognise a Septin-type G domain in the interval 28-342; that stretch reads KGLQLSILLL…ENYRAKVLTE (315 aa). Positions 38-45 are G1 motif; sequence GEKGSGKS. GTP contacts are provided by residues 38–45, G124, 204–212, and R291; these read GEKGSGKS and KADGLTETE. A G3 motif region spans residues 121–124; the sequence is LFPG. The G4 motif stretch occupies residues 203–206; sequence PKAD. A compositionally biased stretch (polar residues) spans 360–381; sequence RGSVSNVSTRRNSASRTLGNPD. The disordered stretch occupies residues 360-385; sequence RGSVSNVSTRRNSASRTLGNPDTNDE. The stretch at 384–417 forms a coiled coil; it reads DENAYQIHKEIDEKNRIIEDYQRKIDLLEKMLAA.

It belongs to the TRAFAC class TrmE-Era-EngA-EngB-Septin-like GTPase superfamily. Septin GTPase family. As to quaternary structure, interacts with itself. Interacts with CDC11 and SPR3; probably to form a ring at the bud neck.

It localises to the membrane. The protein localises to the bud neck. Functionally, septins are GTPases involved in cytokinesis that assemble into filaments and form a ring at the cleavage site. May act by recruiting MYO1 and HOF1, a protein involved in septation, to the site of cleavage. Septins are also involved in cell morphogenesis, bud site selection, chitin deposition, cell cycle regulation, cell compartmentalization and spore wall formation. The polypeptide is Sporulation-regulated protein 28 (SPR28) (Saccharomyces cerevisiae (strain ATCC 204508 / S288c) (Baker's yeast)).